Here is a 367-residue protein sequence, read N- to C-terminus: Serine/threonine-protein kinase Sgk2 (367 aa).

The segment at 1–28 (MASSPVGVPSPQPSRANGNINLGPSANP) is disordered. Position 10 is a phosphoserine (Ser-10). Residues 15–28 (RANGNINLGPSANP) show a composition bias toward polar residues. The region spanning 35 to 292 (FDFLKVIGKG…FLDIKNHMFF (258 aa)) is the Protein kinase domain. ATP-binding positions include 41–49 (IGKGNYGKV) and Lys-64. The Nuclear localization signal signature appears at 68-77 (KKSILKNKEQ). Residue Asp-159 is the Proton acceptor of the active site. Thr-193 carries the phosphothreonine; by PDPK1 modification. The 75-residue stretch at 293–367 (SPINWDDLYH…AQDDDDILDS (75 aa)) folds into the AGC-kinase C-terminal domain. Phosphoserine is present on residues Ser-334 and Ser-356. Tyr-357 is subject to Phosphotyrosine.

The protein belongs to the protein kinase superfamily. AGC Ser/Thr protein kinase family. Post-translationally, activated by phosphorylation on Ser-356 by an unknown kinase (may be mTORC2 but not confirmed), transforming it into a substrate for PDPK1 which then phosphorylates it on Thr-193. In terms of tissue distribution, expressed in the proximal tubule and thick ascending limb of the loop of Henle (TALH).

It is found in the cytoplasm. The protein localises to the nucleus. It catalyses the reaction L-seryl-[protein] + ATP = O-phospho-L-seryl-[protein] + ADP + H(+). It carries out the reaction L-threonyl-[protein] + ATP = O-phospho-L-threonyl-[protein] + ADP + H(+). Two specific sites, one in the kinase domain (Thr-193) and the other in the C-terminal regulatory region (Ser-356), need to be phosphorylated for its full activation. Functionally, serine/threonine-protein kinase which is involved in the regulation of a wide variety of ion channels, membrane transporters, cell growth, survival and proliferation. Up-regulates Na(+) channels: SCNN1A/ENAC, K(+) channels: KCNA3/Kv1.3, KCNE1 and KCNQ1, amino acid transporter: SLC6A19, glutamate transporter: SLC1A6/EAAT4, glutamate receptors: GRIA1/GLUR1 and GRIK2/GLUR6, Na(+)/H(+) exchanger: SLC9A3/NHE3, and the Na(+)/K(+) ATPase. In Rattus norvegicus (Rat), this protein is Serine/threonine-protein kinase Sgk2 (Sgk2).